Consider the following 227-residue polypeptide: UPF0758 protein Pcar_0065 (227 aa).

The 123-residue stretch at 105–227 (RYTSPQAVFA…YVSLADRGVL (123 aa)) folds into the MPN domain. The Zn(2+) site is built by histidine 176, histidine 178, and aspartate 189. Residues 176–189 (HNHPSGDPSPSRED) carry the JAMM motif motif.

Belongs to the UPF0758 family.

The protein is UPF0758 protein Pcar_0065 of Syntrophotalea carbinolica (strain DSM 2380 / NBRC 103641 / GraBd1) (Pelobacter carbinolicus).